An 819-amino-acid chain; its full sequence is Zinc finger protein 27 (819 aa).

The 75-residue stretch at 1-75 (MDVTIDFSRE…KTLGAESCHD (75 aa)) folds into the KRAB domain. The disordered stretch occupies residues 93-123 (PKRPRHWDPPEDEPKHSSDLQTHDESNGLKR). Residues 98–120 (HWDPPEDEPKHSSDLQTHDESNG) are compositionally biased toward basic and acidic residues. 21 C2H2-type zinc fingers span residues 205–227 (YVCV…QKTH), 233–255 (YKCG…RRIH), 261–283 (YDCS…QKIH), 289–311 (HGCV…QKIH), 317–339 (YVCI…RRIH), 345–367 (YACD…QRIH), 401–423 (SICA…QRTH), 429–451 (YQCG…RRIH), 457–479 (YVCV…QVIH), 485–507 (YQCG…KRIH), 513–535 (YVCS…QKTH), 541–563 (YVCA…QRIH), 569–591 (YGCS…EKIH), 597–619 (YGCR…QKIH), 625–647 (HVCA…QRIH), 653–675 (YGCT…RPIH), 681–703 (YVCA…QKTH), 709–731 (YACS…HRIH), 737–759 (YDCG…QRIH), 765–787 (YRCA…QTTH), and 793–815 (YKCV…ENVH).

The protein belongs to the krueppel C2H2-type zinc-finger protein family.

The protein resides in the nucleus. In terms of biological role, may be involved in transcriptional regulation. The sequence is that of Zinc finger protein 27 (Zfp27) from Mus musculus (Mouse).